Consider the following 549-residue polypeptide: FMRFamide receptor (549 aa).

Topologically, residues 1-117 (MSGTAVARLL…NNRIEFWVCG (117 aa)) are extracellular. Residues asparagine 59, asparagine 70, and asparagine 93 are each glycosylated (N-linked (GlcNAc...) asparagine). A helical transmembrane segment spans residues 118–138 (VLINIVGVLGILGNIISMIIL). Residues 139–158 (SRPQMRSSINYLLTGLARCD) are Cytoplasmic-facing. The helical transmembrane segment at 159–179 (TVLIITSILLFGIPSIYPYTG) threads the bilayer. Over 180 to 181 (HF) the chain is Extracellular. A helical transmembrane segment spans residues 182 to 202 (FGYYNYVYPFISPAVFPIGMI). The Cytoplasmic segment spans residues 203 to 238 (AQTASIYMTFTVTLERYVAVCHPLKARALCTYGRAK). The chain crosses the membrane as a helical span at residues 239 to 259 (IYFIVCVCFSLAYNMPRFWEV). Topologically, residues 260–289 (LTVTYPEPGKDVILHCVRPSRLRRSETYIN) are extracellular. Residues 290–310 (IYIHWCYLIVNYIIPFLTLAI) traverse the membrane as a helical segment. Residues 311–341 (LNCLIYRQVKRANRERQRLSRSEKREIGLAT) are Cytoplasmic-facing. Residues 342–362 (MLLCVVIVFFMLNFLPLVLNI) form a helical membrane-spanning segment. The Extracellular portion of the chain corresponds to 363 to 376 (SEAFYSTIDHKITK). Residues 377–397 (ISNLLITINSSVNFLIYIIFG) traverse the membrane as a helical segment. The Cytoplasmic portion of the chain corresponds to 398–549 (EKFKRIFLLI…KKLGHVSSGF (152 aa)).

Belongs to the G-protein coupled receptor 1 family. In terms of tissue distribution, expressed in ovaries, heads and bodies. Expressed in dopaminergic neurons.

The protein localises to the cell membrane. Functionally, a receptor for the FMRFamide peptides. Reacts with high affinity to FMRFamide and intrinsic FMRFamide-related peptides. By stimulating intracellular calcium signaling through the inositol 1,4,5-trisphosphate receptor, Itpr, in dopaminergic neurons, may be involved in the maintenance of neuronal excitability and in the regulation of flight bout duration. This Drosophila melanogaster (Fruit fly) protein is FMRFamide receptor.